A 92-amino-acid polypeptide reads, in one-letter code: Small ribosomal subunit protein uS19c (92 aa).

The protein belongs to the universal ribosomal protein uS19 family.

It is found in the plastid. The protein resides in the chloroplast. In terms of biological role, protein S19 forms a complex with S13 that binds strongly to the 16S ribosomal RNA. The polypeptide is Small ribosomal subunit protein uS19c (rps19) (Pisum sativum (Garden pea)).